The chain runs to 305 residues: Aspartate carbamoyltransferase catalytic subunit (305 aa).

Carbamoyl phosphate is bound by residues Arg56 and Thr57. L-aspartate is bound at residue Lys85. Carbamoyl phosphate contacts are provided by Arg106, His134, and Gln137. L-aspartate-binding residues include Arg167 and Arg227. The carbamoyl phosphate site is built by Leu266 and Pro267.

It belongs to the aspartate/ornithine carbamoyltransferase superfamily. ATCase family. Heterooligomer of catalytic and regulatory chains.

It carries out the reaction carbamoyl phosphate + L-aspartate = N-carbamoyl-L-aspartate + phosphate + H(+). The protein operates within pyrimidine metabolism; UMP biosynthesis via de novo pathway; (S)-dihydroorotate from bicarbonate: step 2/3. Functionally, catalyzes the condensation of carbamoyl phosphate and aspartate to form carbamoyl aspartate and inorganic phosphate, the committed step in the de novo pyrimidine nucleotide biosynthesis pathway. This chain is Aspartate carbamoyltransferase catalytic subunit, found in Thermoplasma acidophilum (strain ATCC 25905 / DSM 1728 / JCM 9062 / NBRC 15155 / AMRC-C165).